Consider the following 306-residue polypeptide: Large ribosomal subunit protein mL45 (306 aa).

The tract at residues 287 to 306 is disordered; sequence LKPEEEYEEAQGEAQKPQLA.

This sequence belongs to the mitochondrion-specific ribosomal protein mL45 family. As to quaternary structure, component of the mitochondrial large ribosomal subunit (mt-LSU). Mature mammalian 55S mitochondrial ribosomes consist of a small (28S) and a large (39S) subunit. The 28S small subunit contains a 12S ribosomal RNA (12S mt-rRNA) and 30 different proteins. The 39S large subunit contains a 16S rRNA (16S mt-rRNA), a copy of mitochondrial valine transfer RNA (mt-tRNA(Val)), which plays an integral structural role, and 52 different proteins.

The protein resides in the mitochondrion. Its function is as follows. Component of the mitochondrial large ribosomal subunit (mt-LSU). Within the mitochondrial ribosomes, required to direct the nascent polypeptide toward the tunnel exit and position the exit at a distance from the membrane surface. This Homo sapiens (Human) protein is Large ribosomal subunit protein mL45.